Consider the following 433-residue polypeptide: Inward rectifier potassium channel 18 (433 aa).

Topologically, residues Met-1–Asp-77 are cytoplasmic. A helical membrane pass occupies residues Ile-78 to Val-104. The Extracellular portion of the chain corresponds to Ile-105–Gly-129. The helical; Pore-forming intramembrane region spans Phe-130–Tyr-146. The Selectivity filter motif lies at Thr-143–Leu-148. Residues Gly-147 to Cys-155 are Extracellular-facing. The chain crosses the membrane as a helical span at residues Leu-156–Lys-183. The Cytoplasmic portion of the chain corresponds to Met-184–Ile-433. The segment at Asp-387 to Ile-433 is disordered. Residues Gln-396–Arg-414 show a composition bias toward basic and acidic residues.

Belongs to the inward rectifier-type potassium channel (TC 1.A.2.1) family. KCNJ12 subfamily. As to quaternary structure, can form heteromeric channels with Kir2.1/KCNJ2. Can form heteromeric channels with Kir2.2/KCNJ12. In terms of processing, probably phosphorylated by PKC; decreases single-channel open probability. As to expression, specifically expressed in skeletal muscle.

Its subcellular location is the cell membrane. It is found in the endoplasmic reticulum. It carries out the reaction K(+)(in) = K(+)(out). Functionally, inward rectifier potassium channels are characterized by a greater tendency to allow potassium to flow into the cell rather than out of it. Their voltage dependence is regulated by the concentration of extracellular potassium; as external potassium is raised, the voltage range of the channel opening shifts to more positive voltages. The inward rectification is mainly due to the blockage of outward current by internal magnesium. The polypeptide is Inward rectifier potassium channel 18 (KCNJ18) (Homo sapiens (Human)).